Consider the following 498-residue polypeptide: ATP synthase subunit beta, chloroplastic (498 aa).

172–179 lines the ATP pocket; sequence GGAGVGKT.

Belongs to the ATPase alpha/beta chains family. As to quaternary structure, F-type ATPases have 2 components, CF(1) - the catalytic core - and CF(0) - the membrane proton channel. CF(1) has five subunits: alpha(3), beta(3), gamma(1), delta(1), epsilon(1). CF(0) has four main subunits: a(1), b(1), b'(1) and c(9-12).

Its subcellular location is the plastid. The protein resides in the chloroplast thylakoid membrane. It catalyses the reaction ATP + H2O + 4 H(+)(in) = ADP + phosphate + 5 H(+)(out). Produces ATP from ADP in the presence of a proton gradient across the membrane. The catalytic sites are hosted primarily by the beta subunits. This chain is ATP synthase subunit beta, chloroplastic, found in Solanum tuberosum (Potato).